A 501-amino-acid polypeptide reads, in one-letter code: Protein translocase subunit SecD (501 aa).

6 helical membrane passes run 9-29 (NLWL…YAVV), 339-359 (AIEQ…VVLI), 371-391 (ISIF…GATL), 394-414 (PGIA…VLIF), 447-467 (VTLL…VKGF), and 470-490 (TLAL…KVFL).

The protein belongs to the SecD/SecF family. SecD subfamily. In terms of assembly, forms a complex with SecF. Part of the essential Sec protein translocation apparatus which comprises SecA, SecYEG and auxiliary proteins SecDF. Other proteins may also be involved.

It localises to the cell inner membrane. Functionally, part of the Sec protein translocase complex. Interacts with the SecYEG preprotein conducting channel. SecDF uses the proton motive force (PMF) to complete protein translocation after the ATP-dependent function of SecA. The chain is Protein translocase subunit SecD from Aquifex aeolicus (strain VF5).